Reading from the N-terminus, the 338-residue chain is Glycerol-3-phosphate dehydrogenase [NAD(P)+] (338 aa).

Positions 14, 15, 35, and 109 each coordinate NADPH. Sn-glycerol 3-phosphate contacts are provided by Lys-109, Gly-138, and Thr-140. Ala-142 provides a ligand contact to NADPH. Lys-194, Asp-247, Ser-257, Arg-258, and Asn-259 together coordinate sn-glycerol 3-phosphate. The Proton acceptor role is filled by Lys-194. Arg-258 contacts NADPH. Val-282 and Glu-284 together coordinate NADPH.

It belongs to the NAD-dependent glycerol-3-phosphate dehydrogenase family.

The protein localises to the cytoplasm. The enzyme catalyses sn-glycerol 3-phosphate + NAD(+) = dihydroxyacetone phosphate + NADH + H(+). It catalyses the reaction sn-glycerol 3-phosphate + NADP(+) = dihydroxyacetone phosphate + NADPH + H(+). It participates in membrane lipid metabolism; glycerophospholipid metabolism. Functionally, catalyzes the reduction of the glycolytic intermediate dihydroxyacetone phosphate (DHAP) to sn-glycerol 3-phosphate (G3P), the key precursor for phospholipid synthesis. This Sodalis glossinidius (strain morsitans) protein is Glycerol-3-phosphate dehydrogenase [NAD(P)+].